The chain runs to 168 residues: uncharacterized protein (168 aa).

Disordered regions lie at residues 37-74 (GGSK…SQFT), 81-100 (QYNY…PNYY), and 117-168 (MQPF…EETN). Polar residues-rich tracts occupy residues 52–74 (HSGQ…SQFT) and 82–95 (YNYN…TRSV). Positions 120–129 (FNNQSFNNQS) are enriched in low complexity. A compositionally biased stretch (polar residues) spans 130–158 (RTHQSKTYQHNQQKRSFNGPRNNGPQNNV).

This is an uncharacterized protein from Acanthamoeba polyphaga (Amoeba).